The chain runs to 50 residues: Sperm protamine P1 (50 aa).

The protein belongs to the protamine P1 family. In terms of tissue distribution, testis.

Its subcellular location is the nucleus. The protein localises to the chromosome. In terms of biological role, protamines substitute for histones in the chromatin of sperm during the haploid phase of spermatogenesis. They compact sperm DNA into a highly condensed, stable and inactive complex. This is Sperm protamine P1 (PRM1) from Chilonatalus micropus (Cuban funnel-eared bat).